A 542-amino-acid chain; its full sequence is Protein lin-9 homolog (542 aa).

Ala-2 is subject to N-acetylalanine. Lys-21 participates in a covalent cross-link: Glycyl lysine isopeptide (Lys-Gly) (interchain with G-Cter in SUMO2). Residues Ser-65 and Ser-95 each carry the phosphoserine modification. Phosphothreonine occurs at positions 96 and 304. 2 positions are modified to phosphoserine: Ser-309 and Ser-321.

The protein belongs to the lin-9 family. Component of the DREAM complex (also named LINC complex) at least composed of E2F4, E2F5, LIN9, LIN37, LIN52, LIN54, MYBL1, MYBL2, RBL1, RBL2, RBBP4, TFDP1 and TFDP2. The complex exists in quiescent cells where it represses cell cycle-dependent genes. It dissociates in S phase when LIN9, LIN37, LIN52 and LIN54 form a subcomplex that binds to MYBL2. Interacts with RB1.

The protein localises to the nucleus. Its subcellular location is the nucleoplasm. Acts as a tumor suppressor. Inhibits DNA synthesis. Its ability to inhibit oncogenic transformation is mediated through its association with RB1. Plays a role in the expression of genes required for the G1/S transition. In Mus musculus (Mouse), this protein is Protein lin-9 homolog (Lin9).